The primary structure comprises 239 residues: Succinate dehydrogenase [ubiquinone] iron-sulfur subunit (239 aa).

In terms of domain architecture, 2Fe-2S ferredoxin-type spans 24–99 (AEAKFSVHPI…NANIITIYPL (76 aa)). Positions 63, 68, 71, and 83 each coordinate [2Fe-2S] cluster. The 4Fe-4S ferredoxin-type domain maps to 142-172 (DRSELNGIYECILCACCSASCPSYWWNHDKY). 3 residues coordinate [4Fe-4S] cluster: C152, C155, and C158. C162 is a [3Fe-4S] cluster binding site. Residue W167 participates in a ubiquinone binding. [3Fe-4S] cluster contacts are provided by C209 and C215. C219 is a [4Fe-4S] cluster binding site.

Belongs to the succinate dehydrogenase/fumarate reductase iron-sulfur protein family. Component of complex II composed of four subunits: a flavoprotein (FP), an iron-sulfur protein (IP), and a cytochrome b composed of a large and a small subunit. [2Fe-2S] cluster is required as a cofactor. Requires [3Fe-4S] cluster as cofactor. It depends on [4Fe-4S] cluster as a cofactor.

The protein resides in the mitochondrion inner membrane. It catalyses the reaction a quinone + succinate = fumarate + a quinol. The protein operates within carbohydrate metabolism; tricarboxylic acid cycle; fumarate from succinate (eukaryal route): step 1/1. Iron-sulfur protein (IP) subunit of succinate dehydrogenase (SDH) that is involved in complex II of the mitochondrial electron transport chain and is responsible for transferring electrons from succinate to ubiquinone (coenzyme Q). This chain is Succinate dehydrogenase [ubiquinone] iron-sulfur subunit (SDH2), found in Porphyra purpurea (Red seaweed).